The chain runs to 158 residues: pH 6 antigen (158 aa).

Residues 1-26 form the signal peptide; it reads MKMKCFAKNALAVTTLMIAACGMANA.

In terms of assembly, forms a homomer composed of subunits assembled in a large structure.

Its subcellular location is the fimbrium. Fibrillar structure, part of fimbriae, necessary for full virulence. The protein is pH 6 antigen (psaA) of Yersinia pestis.